Reading from the N-terminus, the 368-residue chain is DNA replication and repair protein RecF (368 aa).

30 to 37 contributes to the ATP binding site; it reads GKNGTGKT.

Belongs to the RecF family.

Its subcellular location is the cytoplasm. The RecF protein is involved in DNA metabolism; it is required for DNA replication and normal SOS inducibility. RecF binds preferentially to single-stranded, linear DNA. It also seems to bind ATP. This chain is DNA replication and repair protein RecF, found in Chloroherpeton thalassium (strain ATCC 35110 / GB-78).